A 479-amino-acid chain; its full sequence is Aspartyl/glutamyl-tRNA(Asn/Gln) amidotransferase subunit B (479 aa).

Belongs to the GatB/GatE family. GatB subfamily. In terms of assembly, heterotrimer of A, B and C subunits.

It carries out the reaction L-glutamyl-tRNA(Gln) + L-glutamine + ATP + H2O = L-glutaminyl-tRNA(Gln) + L-glutamate + ADP + phosphate + H(+). The catalysed reaction is L-aspartyl-tRNA(Asn) + L-glutamine + ATP + H2O = L-asparaginyl-tRNA(Asn) + L-glutamate + ADP + phosphate + 2 H(+). Functionally, allows the formation of correctly charged Asn-tRNA(Asn) or Gln-tRNA(Gln) through the transamidation of misacylated Asp-tRNA(Asn) or Glu-tRNA(Gln) in organisms which lack either or both of asparaginyl-tRNA or glutaminyl-tRNA synthetases. The reaction takes place in the presence of glutamine and ATP through an activated phospho-Asp-tRNA(Asn) or phospho-Glu-tRNA(Gln). This chain is Aspartyl/glutamyl-tRNA(Asn/Gln) amidotransferase subunit B, found in Streptococcus pyogenes serotype M49 (strain NZ131).